A 1076-amino-acid polypeptide reads, in one-letter code: Protein EXPORTIN 1B (1076 aa).

The Importin N-terminal domain occupies 37 to 103 (ADNILRDLKA…KNYISDVIVQ (67 aa)). HEAT repeat units follow at residues 135–171 (AKWK…EVFD), 232–267 (IFES…LNFG), 282–319 (MNQL…FFTS), 475–514 (DTEK…SMVV), 564–601 (KFLK…KCKR), 613–650 (PFVS…AESD), 683–720 (LKEP…IFLD), 757–794 (REIL…DYAR), 799–836 (ARES…CTLE), 895–935 (ETGL…VLTD), and 943–988 (KLHV…YTTK).

Belongs to the exportin family. In terms of tissue distribution, present in mature pollen grains, unpollinated pistils, and 2-week-old seedlings.

The protein resides in the nucleus. It localises to the nuclear pore complex. Its subcellular location is the nucleus membrane. In terms of biological role, receptor for the leucine-rich nuclear export signal (NES). Binds cooperatively to the NES on its target protein and to the small GTPase Ran in its active GTP-bound form. Required for the maternal-to-embryonic transition and during gametophyte development. This Arabidopsis thaliana (Mouse-ear cress) protein is Protein EXPORTIN 1B.